Reading from the N-terminus, the 204-residue chain is High frequency lysogenization protein HflD homolog (204 aa).

It belongs to the HflD family.

It is found in the cytoplasm. It localises to the cell inner membrane. This Xanthomonas euvesicatoria pv. vesicatoria (strain 85-10) (Xanthomonas campestris pv. vesicatoria) protein is High frequency lysogenization protein HflD homolog.